Here is a 172-residue protein sequence, read N- to C-terminus: uncharacterized protein (172 aa).

An N-acetyltransferase domain is found at 12-172 (IRLRCMEDRD…IAVYERKSYN (161 aa)).

This is an uncharacterized protein from Bacillus subtilis (strain 168).